A 167-amino-acid polypeptide reads, in one-letter code: Lipoprotein signal peptidase (167 aa).

3 consecutive transmembrane segments (helical) span residues 9–29 (AWLY…TKNL), 68–88 (LPLL…YALY), and 98–118 (MGLI…LGMV). Residues aspartate 120 and aspartate 138 contribute to the active site. A helical transmembrane segment spans residues 130–150 (YWPAFNIADASISIGIALLIL).

This sequence belongs to the peptidase A8 family.

The protein localises to the cell inner membrane. It catalyses the reaction Release of signal peptides from bacterial membrane prolipoproteins. Hydrolyzes -Xaa-Yaa-Zaa-|-(S,diacylglyceryl)Cys-, in which Xaa is hydrophobic (preferably Leu), and Yaa (Ala or Ser) and Zaa (Gly or Ala) have small, neutral side chains.. Its pathway is protein modification; lipoprotein biosynthesis (signal peptide cleavage). Functionally, this protein specifically catalyzes the removal of signal peptides from prolipoproteins. The polypeptide is Lipoprotein signal peptidase (Aquifex aeolicus (strain VF5)).